The chain runs to 224 residues: uncharacterized protein (224 aa).

Residues 9 to 68 form the 4Fe-4S domain; that stretch reads SKMVDVNEITKYLPGFNCGACGYKRCDLFAEALLNKDVKLEDCPFLLRERFKENYEKLKE. [4Fe-4S] cluster is bound by residues cysteine 26, cysteine 29, cysteine 34, and cysteine 51.

[4Fe-4S] cluster serves as cofactor.

This is an uncharacterized protein from Methanocaldococcus jannaschii (strain ATCC 43067 / DSM 2661 / JAL-1 / JCM 10045 / NBRC 100440) (Methanococcus jannaschii).